Here is a 177-residue protein sequence, read N- to C-terminus: Inorganic pyrophosphatase (177 aa).

Residues lysine 31, arginine 45, and tyrosine 57 each contribute to the substrate site. Residues aspartate 67, aspartate 72, and aspartate 104 each contribute to the Mg(2+) site. Tyrosine 142 lines the substrate pocket.

The protein belongs to the PPase family. Homohexamer. The cofactor is Mg(2+).

It localises to the cytoplasm. The catalysed reaction is diphosphate + H2O = 2 phosphate + H(+). Functionally, catalyzes the hydrolysis of inorganic pyrophosphate (PPi) forming two phosphate ions. This chain is Inorganic pyrophosphatase, found in Neisseria meningitidis serogroup B (strain ATCC BAA-335 / MC58).